The sequence spans 170 residues: Disulfide bond formation protein B (170 aa).

Topologically, residues 1–14 (MNDSTLALRRERRL) are cytoplasmic. Residues 15 to 31 (LMLLGWVCIALLAGALY) traverse the membrane as a helical segment. Residues 32–49 (LQYVKNEDPCPLCIIQRY) lie on the Periplasmic side of the membrane. Residues cysteine 41 and cysteine 44 are joined by a disulfide bond. A helical membrane pass occupies residues 50–64 (FFAAIGIFAFLAAGI). At 65 to 71 (RNWRVIW) the chain is on the cytoplasmic side. A helical membrane pass occupies residues 72 to 89 (VFELLIAIAAAGGVGTAA). The Periplasmic segment spans residues 90 to 144 (RHLSIQMNPGFSCGFDTLQPIVDSLPPAQWFPGMFKVAGLCETVYPPIFGILLPG). Cysteine 102 and cysteine 130 form a disulfide bridge. Residues 145–163 (WALIGFAVILVAVASSLWR) traverse the membrane as a helical segment. At 164–170 (HRRKLAG) the chain is on the cytoplasmic side.

It belongs to the DsbB family.

It is found in the cell inner membrane. Required for disulfide bond formation in some periplasmic proteins. Acts by oxidizing the DsbA protein. The chain is Disulfide bond formation protein B from Burkholderia ambifaria (strain ATCC BAA-244 / DSM 16087 / CCUG 44356 / LMG 19182 / AMMD) (Burkholderia cepacia (strain AMMD)).